A 408-amino-acid chain; its full sequence is Succinylornithine transaminase (408 aa).

Lys252 carries the N6-(pyridoxal phosphate)lysine modification.

The protein belongs to the class-III pyridoxal-phosphate-dependent aminotransferase family. AstC subfamily. The cofactor is pyridoxal 5'-phosphate.

It catalyses the reaction N(2)-succinyl-L-ornithine + 2-oxoglutarate = N-succinyl-L-glutamate 5-semialdehyde + L-glutamate. The protein operates within amino-acid degradation; L-arginine degradation via AST pathway; L-glutamate and succinate from L-arginine: step 3/5. Functionally, catalyzes the transamination of N(2)-succinylornithine and alpha-ketoglutarate into N(2)-succinylglutamate semialdehyde and glutamate. Can also act as an acetylornithine aminotransferase. In Salmonella agona (strain SL483), this protein is Succinylornithine transaminase.